The sequence spans 184 residues: Ribosome-recycling factor (184 aa).

Belongs to the RRF family.

It localises to the cytoplasm. Its function is as follows. Responsible for the release of ribosomes from messenger RNA at the termination of protein biosynthesis. May increase the efficiency of translation by recycling ribosomes from one round of translation to another. The protein is Ribosome-recycling factor of Acinetobacter baumannii (strain AB307-0294).